The sequence spans 800 residues: MSLVYLLIAILVIMAMILLMSKRRALAKYAGYIALVAPVISSIYFLIQIPSVAKLQYLSTSIPWIKTLDINLDLRLDGLSLMFSLIISLIGIAVFFYATQYLSSRKDNLPRFYFYLTLFMFSMIGIVLSDNTILMYIFWELTSVSSFLLISYWYNNGDSQFGAMQSFMITVFGGLALLVGFIMLYIMTGTNNITEILGQADHIKNHGLFIPMIFMFLLGAFTKSAQFPFHIWLPRAMAAPTPVSAYLHSATMVKAGIFLLLRFTPLLGLSNMYVYIVTFVGLITMLFGSITALKQWDLKGILAYSTISQLGMIMAMVGIGGGYAQHQQDAIASIYVFVLFGALFHLMNHAIFKCALFMGVGILDHEAGSRDIRILSGMRQLFPKMNLVMTIAALSMAGVPFLNGFLSKEMFLDALTQTGQLSQFSLISMIAIVFVGVIASVFTFTYALYMVKEVFWTKYDSKVFTKKNIHEPWLFSLPSLILMVLVPVIFFVPNIFGKGIIVLALRAVSGGNHQIDQLAPHVSQWHGFNIPLLLTIIIILLGSVLAIKVDWKKVFTGKIRQISVSKSYEMVYRHFEKFATKRFKRVMQDRLNQYIIMTLGIFMIIIGYGYIRIGLPKVHQLHVSEFGALEIILAIVTVTIGISLIFIRQRLTMVILNGVIGFVVTLFFIAMKAPDLALTQLVVETITTILFIVSFSRLPNVPRSNANKKREIIKISVSLLMALIVVSLIFITQQTDGLSSISDFYLKADKLTGGKNIVNAILGDFRALDTLFEGLVLIITGLGIYTLLNYQDRRGQDERE.

20 consecutive transmembrane segments (helical) span residues 1 to 21 (MSLV…LLMS), 33 to 53 (IALV…PSVA), 78 to 98 (GLSL…FFYA), 118 to 138 (LFMF…MYIF), 167 to 187 (FMIT…LYIM), 207 to 227 (GLFI…SAQF), 241 to 261 (TPVS…FLLL), 273 to 293 (YVYI…ITAL), 300 to 320 (GILA…VGIG), 331 to 351 (IASI…NHAI), 387 to 407 (LVMT…GFLS), 424 to 444 (FSLI…VFTF), 472 to 492 (PWLF…IFFV), 527 to 547 (GFNI…VLAI), 595 to 615 (IIMT…RIGL), 627 to 647 (GALE…LIFI), 651 to 671 (LTMV…FIAM), 676 to 696 (LALT…VSFS), 712 to 732 (IIKI…IFIT), and 768 to 788 (LDTL…YTLL).

The protein belongs to the CPA3 antiporters (TC 2.A.63) subunit A family. May form a heterooligomeric complex that consists of seven subunits: mnhA2, mnhB2, mnhC2, mnhD2, mnhE2, mnhF2 and mnhG2.

Its subcellular location is the cell membrane. This Staphylococcus aureus (strain MSSA476) protein is Putative antiporter subunit mnhA2 (mnhA2).